Consider the following 88-residue polypeptide: Small ribosomal subunit protein uS15 (88 aa).

The protein belongs to the universal ribosomal protein uS15 family. As to quaternary structure, part of the 30S ribosomal subunit. Forms a bridge to the 50S subunit in the 70S ribosome, contacting the 23S rRNA.

In terms of biological role, one of the primary rRNA binding proteins, it binds directly to 16S rRNA where it helps nucleate assembly of the platform of the 30S subunit by binding and bridging several RNA helices of the 16S rRNA. Functionally, forms an intersubunit bridge (bridge B4) with the 23S rRNA of the 50S subunit in the ribosome. The chain is Small ribosomal subunit protein uS15 from Borrelia garinii subsp. bavariensis (strain ATCC BAA-2496 / DSM 23469 / PBi) (Borreliella bavariensis).